The chain runs to 766 residues: Nitrogen permease regulator 3 (766 aa).

An N-terminal signal peptide occupies residues 1-23 (MSSVVRPPDPCLVAIILITCSRA). Disordered stretches follow at residues 33 to 140 (PNPS…WDSF), 186 to 257 (RKKR…VTDG), and 594 to 638 (EEAK…NATP). A compositionally biased stretch (polar residues) spans 36–49 (SIASAPSRSNSRTK). Over residues 51-61 (SPRASDSSPSS) the composition is skewed to low complexity. Acidic residues predominate over residues 62–74 (DNEEGSSSDEDDL). Polar residues predominate over residues 89–110 (RRLSSGSPSTKAASQQRKSNLG). 2 stretches are compositionally biased toward basic and acidic residues: residues 118–133 (ETPR…HELE) and 217–250 (GGEK…HPDE).

This sequence belongs to the NPR3 family.

Functionally, mediates inactivation of the TORC1 complex in response to amino acid starvation. Required for meiotic nuclear division. In Coccidioides immitis (strain RS) (Valley fever fungus), this protein is Nitrogen permease regulator 3 (NPR3).